Here is a 629-residue protein sequence, read N- to C-terminus: tRNA uridine 5-carboxymethylaminomethyl modification enzyme MnmG (629 aa).

FAD is bound by residues 15 to 20 (GAGHAG), V127, and S182. The interval 203–226 (TPPRVKSSTIDYSKTEEQPGDDHP) is disordered. Basic and acidic residues predominate over residues 215–226 (SKTEEQPGDDHP). 274-288 (GARYCPSIEDKIVRF) lines the NAD(+) pocket. Residue Q371 participates in FAD binding.

It belongs to the MnmG family. In terms of assembly, homodimer. Heterotetramer of two MnmE and two MnmG subunits. The cofactor is FAD.

The protein resides in the cytoplasm. Functionally, NAD-binding protein involved in the addition of a carboxymethylaminomethyl (cmnm) group at the wobble position (U34) of certain tRNAs, forming tRNA-cmnm(5)s(2)U34. The sequence is that of tRNA uridine 5-carboxymethylaminomethyl modification enzyme MnmG from Listeria monocytogenes serovar 1/2a (strain ATCC BAA-679 / EGD-e).